An 821-amino-acid chain; its full sequence is Protein SCAR1 (821 aa).

Disordered regions lie at residues K168 to R189, T205 to S289, and T577 to K625. Residues C206–E225 are compositionally biased toward polar residues. Residues I226–K250 are compositionally biased toward basic and acidic residues. Polar residues predominate over residues V252–I265. Over residues S592–Q612 the composition is skewed to low complexity. Positions E756–V774 constitute a WH2 domain. Positions Q802 to T821 are disordered. The span at D807–T821 shows a compositional bias: acidic residues.

The protein belongs to the SCAR/WAVE family. Binds BRK1 and actin. Interacts with SPK1, ABI1 and ABI2. In terms of tissue distribution, expressed in expanding cotyledons, expanding leaves and expanding siliques containing developing embryos. Detected in unopened flower buds and in the expanding tip region of roots. Reduced expression in mature leaves and mature cotyledons.

It is found in the cytoplasm. It localises to the cytoskeleton. Functionally, involved in regulation of actin and microtubule organization. Part of a WAVE complex that activates the Arp2/3 complex. Regulates trichome branch positioning and expansion. This is Protein SCAR1 (SCAR1) from Arabidopsis thaliana (Mouse-ear cress).